Here is a 103-residue protein sequence, read N- to C-terminus: Large ribosomal subunit protein bL21 (103 aa).

This sequence belongs to the bacterial ribosomal protein bL21 family. As to quaternary structure, part of the 50S ribosomal subunit. Contacts protein L20.

In terms of biological role, this protein binds to 23S rRNA in the presence of protein L20. The sequence is that of Large ribosomal subunit protein bL21 from Bordetella petrii (strain ATCC BAA-461 / DSM 12804 / CCUG 43448).